The sequence spans 3092 residues: Inhibitory regulator protein IRA1 (3092 aa).

Disordered stretches follow at residues 375–430 and 450–487; these read HLHH…MASL and LGQANTSTSTTAATTKTDADTPSTMNTNNNNNNNNSAN. Residues 379 to 400 are compositionally biased toward low complexity; sequence SSSSSKTTNTNSPNSISKTSIK. Over residues 401–430 the composition is skewed to polar residues; the sequence is QSSVNASGNVSPSQFSTGNDASPTSPMASL. Low complexity predominate over residues 455 to 487; the sequence is TSTSTTAATTKTDADTPSTMNTNNNNNNNNSAN. Residues S497 and S915 each carry the phosphoserine modification. Disordered regions lie at residues 946–988 and 1003–1023; these read SGVP…VLSS and TILKNIKSPKPNKTKKIADDK. A compositionally biased stretch (low complexity) spans 965-988; the sequence is QSPYSSPPQLQQSDLPSPLSVLSS. S1342 carries the phosphoserine modification. Residues 1725-1930 form the Ras-GAP domain; the sequence is NASHILVTEL…DKIFNFLSEL (206 aa). Phosphoserine; by PKA occurs at positions 1753 and 3004.

It localises to the cytoplasm. Functionally, inhibitory regulator of the Ras-cyclic AMP pathway in S.cerevisiae. Stimulates the GTPase activity of Ras proteins. In Saccharomyces cerevisiae (strain ATCC 204508 / S288c) (Baker's yeast), this protein is Inhibitory regulator protein IRA1 (IRA1).